Reading from the N-terminus, the 76-residue chain is Putative defensin-like protein 121 (76 aa).

The first 26 residues, 1–26, serve as a signal peptide directing secretion; sequence MTYKATILAIFMIILVLGIGTKETRG. Cystine bridges form between cysteine 30/cysteine 74, cysteine 39/cysteine 59, cysteine 44/cysteine 68, and cysteine 48/cysteine 70.

The protein belongs to the DEFL family.

It is found in the secreted. This is Putative defensin-like protein 121 (LCR55) from Arabidopsis thaliana (Mouse-ear cress).